A 202-amino-acid polypeptide reads, in one-letter code: Neuroligin-3 (202 aa).

Residues 1–202 lie on the Extracellular side of the membrane; sequence RYGSPTYFYA…TGTRMQGHSW (202 aa). A disulfide bridge links cysteine 15 with cysteine 49. N-linked (GlcNAc...) asparagine glycosylation occurs at asparagine 50. Residues 154 to 202 are disordered; sequence LRIPPTAPTSPAGPMARPGAPSGQPSHLPTATRMPRGPGTGTRMQGHSW.

It belongs to the type-B carboxylesterase/lipase family. As to quaternary structure, homodimer, and heterodimer with NLGN1 and NLGN2. Interacts with neurexins NRXN1, NRXN2 and NRXN3. Interaction with neurexins is mediated by heparan sulfate glycan modification on neurexin. Interacts (via its C-terminus) with DLG4/PSD-95 (via PDZ domain 3).

The protein resides in the cell membrane. It localises to the synapse. Its function is as follows. Cell surface protein involved in cell-cell-interactions via its interactions with neurexin family members. Plays a role in synapse function and synaptic signal transmission, and probably mediates its effects by recruiting and clustering other synaptic proteins. May promote the initial formation of synapses, but is not essential for this. May also play a role in glia-glia or glia-neuron interactions in the developing peripheral nervous system. The sequence is that of Neuroligin-3 (NLGN3) from Macaca mulatta (Rhesus macaque).